A 141-amino-acid polypeptide reads, in one-letter code: Large ribosomal subunit protein uL13 (141 aa).

Belongs to the universal ribosomal protein uL13 family. In terms of assembly, part of the 50S ribosomal subunit.

Its function is as follows. This protein is one of the early assembly proteins of the 50S ribosomal subunit, although it is not seen to bind rRNA by itself. It is important during the early stages of 50S assembly. The protein is Large ribosomal subunit protein uL13 of Helicobacter pylori (strain Shi470).